Reading from the N-terminus, the 372-residue chain is Beta sliding clamp (372 aa).

This sequence belongs to the beta sliding clamp family. In terms of assembly, forms a ring-shaped head-to-tail homodimer around DNA which binds and tethers DNA polymerases and other proteins to the DNA. The DNA replisome complex has a single clamp-loading complex (3 tau and 1 each of delta, delta', psi and chi subunits) which binds 3 Pol III cores (1 core on the leading strand and 2 on the lagging strand) each with a beta sliding clamp dimer. Additional proteins in the replisome are other copies of gamma, psi and chi, Ssb, DNA helicase and RNA primase.

It localises to the cytoplasm. Confers DNA tethering and processivity to DNA polymerases and other proteins. Acts as a clamp, forming a ring around DNA (a reaction catalyzed by the clamp-loading complex) which diffuses in an ATP-independent manner freely and bidirectionally along dsDNA. Initially characterized for its ability to contact the catalytic subunit of DNA polymerase III (Pol III), a complex, multichain enzyme responsible for most of the replicative synthesis in bacteria; Pol III exhibits 3'-5' exonuclease proofreading activity. The beta chain is required for initiation of replication as well as for processivity of DNA replication. This Caulobacter vibrioides (strain ATCC 19089 / CIP 103742 / CB 15) (Caulobacter crescentus) protein is Beta sliding clamp (dnaN).